Consider the following 536-residue polypeptide: Arylsulfatase (536 aa).

The Ca(2+) site is built by Asp13, Asp14, and Cys51. Cys51 acts as the Nucleophile in catalysis. Cys51 carries the 3-oxoalanine (Cys) modification. His115 is an active-site residue. Ca(2+)-binding residues include Asp317 and Asn318.

This sequence belongs to the sulfatase family. In terms of assembly, monomer. Requires Ca(2+) as cofactor. In terms of processing, the conversion to 3-oxoalanine (also known as C-formylglycine, FGly), of a serine or cysteine residue in prokaryotes and of a cysteine residue in eukaryotes, is critical for catalytic activity.

It is found in the cytoplasm. The enzyme catalyses an aryl sulfate + H2O = a phenol + sulfate + H(+). In terms of biological role, hydrolyzes the bond between sulfate and the aromatic ring in a compound such as 4-nitrocatechol sulfate. The polypeptide is Arylsulfatase (atsA) (Pseudomonas aeruginosa (strain ATCC 15692 / DSM 22644 / CIP 104116 / JCM 14847 / LMG 12228 / 1C / PRS 101 / PAO1)).